The sequence spans 175 residues: EKC/KEOPS complex subunit TPRKB (175 aa).

The protein belongs to the CGI121/TPRKB family. In terms of assembly, component of the EKC/KEOPS complex.

It is found in the cytoplasm. The protein resides in the cytosol. It localises to the nucleus. Functionally, component of the EKC/KEOPS complex that is required for the formation of a threonylcarbamoyl group on adenosine at position 37 (t(6)A37) in tRNAs that read codons beginning with adenine. The complex is probably involved in the transfer of the threonylcarbamoyl moiety of threonylcarbamoyl-AMP (TC-AMP) to the N6 group of A37. Tprkb acts as an allosteric effector that regulates the t(6)A activity of the complex. This chain is EKC/KEOPS complex subunit TPRKB, found in Danio rerio (Zebrafish).